We begin with the raw amino-acid sequence, 344 residues long: Nicotinate-nucleotide--dimethylbenzimidazole phosphoribosyltransferase (344 aa).

E310 functions as the Proton acceptor in the catalytic mechanism.

It belongs to the CobT family.

The catalysed reaction is 5,6-dimethylbenzimidazole + nicotinate beta-D-ribonucleotide = alpha-ribazole 5'-phosphate + nicotinate + H(+). Its pathway is nucleoside biosynthesis; alpha-ribazole biosynthesis; alpha-ribazole from 5,6-dimethylbenzimidazole: step 1/2. Catalyzes the synthesis of alpha-ribazole-5'-phosphate from nicotinate mononucleotide (NAMN) and 5,6-dimethylbenzimidazole (DMB). This is Nicotinate-nucleotide--dimethylbenzimidazole phosphoribosyltransferase from Chromobacterium violaceum (strain ATCC 12472 / DSM 30191 / JCM 1249 / CCUG 213 / NBRC 12614 / NCIMB 9131 / NCTC 9757 / MK).